The primary structure comprises 98 residues: Large ribosomal subunit protein uL23 (98 aa).

The protein belongs to the universal ribosomal protein uL23 family. In terms of assembly, part of the 50S ribosomal subunit. Contacts protein L29, and trigger factor when it is bound to the ribosome.

Functionally, one of the early assembly proteins it binds 23S rRNA. One of the proteins that surrounds the polypeptide exit tunnel on the outside of the ribosome. Forms the main docking site for trigger factor binding to the ribosome. This chain is Large ribosomal subunit protein uL23, found in Acidothermus cellulolyticus (strain ATCC 43068 / DSM 8971 / 11B).